Consider the following 223-residue polypeptide: Na(+)-translocating NADH-quinone reductase subunit D (223 aa).

The next 5 membrane-spanning stretches (helical) occupy residues 42 to 62, 66 to 86, 103 to 123, 131 to 151, and 178 to 198; these read TVMAIALTLVTGFSNLFISMI, IPSSIRMIVQMVIIASLVIVV, VFVGLIITNCIVMGRAEAFAM, FFDGIGNGLGYSAMLLVLGFI, and NGLLLLPPSAFFLIGLIIWAL.

It belongs to the NqrDE/RnfAE family. In terms of assembly, composed of six subunits; NqrA, NqrB, NqrC, NqrD, NqrE and NqrF.

It is found in the cell inner membrane. The catalysed reaction is a ubiquinone + n Na(+)(in) + NADH + H(+) = a ubiquinol + n Na(+)(out) + NAD(+). Its function is as follows. NQR complex catalyzes the reduction of ubiquinone-1 to ubiquinol by two successive reactions, coupled with the transport of Na(+) ions from the cytoplasm to the periplasm. NqrA to NqrE are probably involved in the second step, the conversion of ubisemiquinone to ubiquinol. The polypeptide is Na(+)-translocating NADH-quinone reductase subunit D (Pseudomonas paraeruginosa (strain DSM 24068 / PA7) (Pseudomonas aeruginosa (strain PA7))).